A 368-amino-acid polypeptide reads, in one-letter code: 1-deoxy-D-xylulose 5-phosphate reductoisomerase (368 aa).

NADPH-binding residues include Thr-9, Gly-10, Ser-11, Ile-12, Asn-35, and Asn-106. Lys-107 contributes to the 1-deoxy-D-xylulose 5-phosphate binding site. Glu-108 is an NADPH binding site. Residue Asp-132 coordinates Mn(2+). 1-deoxy-D-xylulose 5-phosphate-binding residues include Ser-133, Glu-134, Ser-158, and His-181. Glu-134 is a Mn(2+) binding site. Residue Gly-187 coordinates NADPH. The 1-deoxy-D-xylulose 5-phosphate site is built by Ser-194, Asn-199, Lys-200, and Glu-203. Glu-203 is a Mn(2+) binding site.

Belongs to the DXR family. Mg(2+) is required as a cofactor. Mn(2+) serves as cofactor.

It catalyses the reaction 2-C-methyl-D-erythritol 4-phosphate + NADP(+) = 1-deoxy-D-xylulose 5-phosphate + NADPH + H(+). It functions in the pathway isoprenoid biosynthesis; isopentenyl diphosphate biosynthesis via DXP pathway; isopentenyl diphosphate from 1-deoxy-D-xylulose 5-phosphate: step 1/6. Catalyzes the NADPH-dependent rearrangement and reduction of 1-deoxy-D-xylulose-5-phosphate (DXP) to 2-C-methyl-D-erythritol 4-phosphate (MEP). The polypeptide is 1-deoxy-D-xylulose 5-phosphate reductoisomerase (Mycoplasmoides gallisepticum (strain R(low / passage 15 / clone 2)) (Mycoplasma gallisepticum)).